Reading from the N-terminus, the 274-residue chain is Cytochrome b-c1 complex subunit Rieske, mitochondrial (274 aa).

Over 79 to 103 (SHTDVKVPDFCDYRRPEVLDSTKSS) the chain is Mitochondrial matrix. The chain crosses the membrane as a helical span at residues 104–140 (RESSEARKSFSYMVTAVTTVGVAYAAKNAVTQFVSSM). Residues 141 to 274 (SASADVLAMA…FTSDDMVVVG (134 aa)) lie on the Mitochondrial intermembrane side of the membrane. Residues 187–272 (EAAVELSQLR…YEFTSDDMVV (86 aa)) enclose the Rieske domain. Residues C217, H219, C236, H239, and S241 each contribute to the [2Fe-2S] cluster site. C222 and C238 are joined by a disulfide.

This sequence belongs to the Rieske iron-sulfur protein family. In terms of assembly, component of the ubiquinol-cytochrome c oxidoreductase (cytochrome b-c1 complex, complex III, CIII), a multisubunit enzyme composed of 11 subunits. The complex is composed of 3 respiratory subunits cytochrome b, cytochrome c1 and Rieske protein UQCRFS1, 2 core protein subunits UQCRC1/QCR1 and UQCRC2/QCR2, and 6 low-molecular weight protein subunits UQCRH/QCR6, UQCRB/QCR7, UQCRQ/QCR8, UQCR10/QCR9, UQCR11/QCR10 and subunit 9, the cleavage product of Rieske protein UQCRFS1. The complex exists as an obligatory dimer and forms supercomplexes (SCs) in the inner mitochondrial membrane with NADH-ubiquinone oxidoreductase (complex I, CI) and cytochrome c oxidase (complex IV, CIV), resulting in different assemblies (supercomplex SCI(1)III(2)IV(1) and megacomplex MCI(2)III(2)IV(2)). Incorporation of the Rieske protein UQCRFS1 is the penultimate step in complex III assembly. Interacts with TTC19, which is involved in the clearance of UQCRFS1 fragments. Component of the ubiquinol-cytochrome c oxidoreductase (cytochrome b-c1 complex, complex III, CIII). Subunit 9 corresponds to the mitochondrial targeting sequence (MTS) of Rieske protein UQCRFS1. It is retained after processing and incorporated inside complex III, where it remains bound to the complex and localizes between the 2 core subunits UQCRC1/QCR1 and UQCRC2/QCR2. It depends on [2Fe-2S] cluster as a cofactor. Post-translationally, proteolytic processing is necessary for the correct insertion of UQCRFS1 in the complex III dimer. Several fragments are generated during UQCRFS1 insertion, most probably due to the endogenous matrix-processing peptidase (MPP) activity of the 2 core protein subunits UQCRC1/QCR1 and UQCRC2/QCR2, which are homologous to the 2 mitochondrial-processing peptidase (MPP) subunits beta-MPP and alpha-MPP respectively. The action of the protease is also necessary for the clearance of the UQCRFS1 fragments.

The protein localises to the mitochondrion inner membrane. It catalyses the reaction a quinol + 2 Fe(III)-[cytochrome c](out) = a quinone + 2 Fe(II)-[cytochrome c](out) + 2 H(+)(out). Component of the ubiquinol-cytochrome c oxidoreductase, a multisubunit transmembrane complex that is part of the mitochondrial electron transport chain which drives oxidative phosphorylation. The respiratory chain contains 3 multisubunit complexes succinate dehydrogenase (complex II, CII), ubiquinol-cytochrome c oxidoreductase (cytochrome b-c1 complex, complex III, CIII) and cytochrome c oxidase (complex IV, CIV), that cooperate to transfer electrons derived from NADH and succinate to molecular oxygen, creating an electrochemical gradient over the inner membrane that drives transmembrane transport and the ATP synthase. The cytochrome b-c1 complex catalyzes electron transfer from ubiquinol to cytochrome c, linking this redox reaction to translocation of protons across the mitochondrial inner membrane, with protons being carried across the membrane as hydrogens on the quinol. In the process called Q cycle, 2 protons are consumed from the matrix, 4 protons are released into the intermembrane space and 2 electrons are passed to cytochrome c. The Rieske protein is a catalytic core subunit containing a [2Fe-2S] iron-sulfur cluster. It cycles between 2 conformational states during catalysis to transfer electrons from the quinol bound in the Q(0) site in cytochrome b to cytochrome c1. Incorporation of UQCRFS1 is the penultimate step in complex III assembly. Its function is as follows. Component of the ubiquinol-cytochrome c oxidoreductase (cytochrome b-c1 complex, complex III, CIII). UQCRFS1 undergoes proteolytic processing once it is incorporated in the complex III dimer. One of the fragments, called subunit 9, corresponds to its mitochondrial targeting sequence (MTS). The proteolytic processing is necessary for the correct insertion of UQCRFS1 in the complex III dimer, but the persistence of UQCRFS1-derived fragments may prevent newly imported UQCRFS1 to be processed and assembled into complex III and is detrimental for the complex III structure and function. The chain is Cytochrome b-c1 complex subunit Rieske, mitochondrial (UQCRFS1) from Colobus polykomos (Western black-and-white colobus monkey).